A 541-amino-acid polypeptide reads, in one-letter code: Kinesin light chain 1 (541 aa).

Residues 27 to 156 adopt a coiled-coil conformation; the sequence is KTKQVIQGLE…HLEFMNQLKK (130 aa). The segment covering 156–176 has biased composition (basic and acidic residues); sequence KYDDDISPSEDKDSDSSKEPL. Residues 156-201 form a disordered region; sequence KYDDDISPSEDKDSDSSKEPLDDLFPNDEDEPGQGIQHSDSSAAAA. S162 bears the Phosphoserine mark. TPR repeat units lie at residues 211-244, 253-286, 295-328, 337-370, and 380-413; these read LRTL…LEKT, ATML…REKT, AATL…REKV, AKQL…YQTK, and AKTK…AHEA. Y448 is modified (phosphotyrosine). S459 carries the phosphoserine modification. The stretch at 463 to 496 is one TPR 6 repeat; the sequence is TTTLKNLGALYRRQGKFEAAETLEEAAMRSRKQG. Residues 493–541 are disordered; the sequence is RKQGLDNVHKQRVAEVLNDPESMEKRRSRESLNMDVVKYESGPDGGEEA. Basic and acidic residues-rich tracts occupy residues 495–505 and 514–524; these read QGLDNVHKQRV and SMEKRRSRESL. Phosphoserine; by AMPK is present on residues S520 and S523.

Belongs to the kinesin light chain family. As to quaternary structure, oligomeric complex composed of two heavy chains and two light chains. Interacts with SPAG9. Interacts with ATCAY; may link mitochondria to KLC1 and regulate mitochondria localization into neuron projections. Interacts (via TPR repeats) with TOR1A; the interaction associates TOR1A with the kinesin oligomeric complex. Interacts with BORCS5. Interacts with MAPK8IP3/JIP3 and NTRK2/TRKB; interaction with NTRK2/TRKB is mediated by MAPK8IP3/JIP3. Interacts with CLSTN1; phosphorylation at Ser-459 inhibits interaction with CLSTN1. In terms of processing, phosphorylation at Ser-459 by ERK inhibits interaction with CLSTN1 and localization to cytoplasmic vesicles.

Its subcellular location is the cell projection. It is found in the growth cone. The protein resides in the cytoplasmic vesicle. The protein localises to the cytoplasm. It localises to the cytoskeleton. Kinesin is a microtubule-associated force-producing protein that may play a role in organelle transport. The light chain may function in coupling of cargo to the heavy chain or in the modulation of its ATPase activity. The chain is Kinesin light chain 1 (Klc1) from Mus musculus (Mouse).